The chain runs to 317 residues: Lipoyl synthase (317 aa).

[4Fe-4S] cluster contacts are provided by C55, C60, C66, C81, C85, C88, and S292. In terms of domain architecture, Radical SAM core spans 67–281 (WEDREATFLI…ERYATEIGFA (215 aa)).

It belongs to the radical SAM superfamily. Lipoyl synthase family. It depends on [4Fe-4S] cluster as a cofactor.

It is found in the cytoplasm. The enzyme catalyses [[Fe-S] cluster scaffold protein carrying a second [4Fe-4S](2+) cluster] + N(6)-octanoyl-L-lysyl-[protein] + 2 oxidized [2Fe-2S]-[ferredoxin] + 2 S-adenosyl-L-methionine + 4 H(+) = [[Fe-S] cluster scaffold protein] + N(6)-[(R)-dihydrolipoyl]-L-lysyl-[protein] + 4 Fe(3+) + 2 hydrogen sulfide + 2 5'-deoxyadenosine + 2 L-methionine + 2 reduced [2Fe-2S]-[ferredoxin]. It participates in protein modification; protein lipoylation via endogenous pathway; protein N(6)-(lipoyl)lysine from octanoyl-[acyl-carrier-protein]: step 2/2. Functionally, catalyzes the radical-mediated insertion of two sulfur atoms into the C-6 and C-8 positions of the octanoyl moiety bound to the lipoyl domains of lipoate-dependent enzymes, thereby converting the octanoylated domains into lipoylated derivatives. This is Lipoyl synthase from Mycolicibacterium gilvum (strain PYR-GCK) (Mycobacterium gilvum (strain PYR-GCK)).